The following is a 378-amino-acid chain: Ecotin-like protein 3 (378 aa).

Disordered stretches follow at residues 191-216 (HRLS…HAAP) and 238-378 (PQNN…KADP). Positions 274–287 (NEPSPSRPRLSSTE) are enriched in polar residues. Positions 337–348 (RKAEDNVYEKTM) are enriched in basic and acidic residues. Residues 362–378 (KASASSKKSGNGSKADP) show a composition bias toward low complexity.

This sequence belongs to the protease inhibitor I11 (ecotin) family.

This chain is Ecotin-like protein 3, found in Leishmania infantum.